The sequence spans 676 residues: XK-related protein 5 (676 aa).

The next 7 helical transmembrane spans lie at 37-57 (WLAL…FLWF), 114-134 (LLEA…VFLA), 140-160 (IVPG…LVSY), 206-226 (VWVL…LVAQ), 239-259 (LFNL…WDSP), 266-286 (SFYL…TDFL), and 294-314 (LWTV…LVIY). Disordered stretches follow at residues 336-362 (PIED…DSSS), 372-391 (TSLD…GLGE), 495-538 (LEDN…KEGQ), and 598-661 (PIPG…IQRD). Positions 498–509 (NATTQKPPATQE) are enriched in polar residues.

The protein belongs to the XK family.

It localises to the cell membrane. The polypeptide is XK-related protein 5 (Mus musculus (Mouse)).